A 591-amino-acid chain; its full sequence is L-fucose isomerase (591 aa).

Active-site proton acceptor residues include E337 and D361. Mn(2+) is bound by residues E337, D361, and H528.

The protein belongs to the L-fucose isomerase family. In terms of assembly, homohexamer. It depends on Mn(2+) as a cofactor.

The protein localises to the cytoplasm. It catalyses the reaction L-fucose = L-fuculose. It functions in the pathway carbohydrate degradation; L-fucose degradation; L-lactaldehyde and glycerone phosphate from L-fucose: step 1/3. Converts the aldose L-fucose into the corresponding ketose L-fuculose. In Escherichia coli (strain UTI89 / UPEC), this protein is L-fucose isomerase.